Reading from the N-terminus, the 267-residue chain is NH(3)-dependent NAD(+) synthetase (267 aa).

38-45 (GISGGVDS) contacts ATP. D44 provides a ligand contact to Mg(2+). R123 is a binding site for deamido-NAD(+). T143 contributes to the ATP binding site. E148 contributes to the Mg(2+) binding site. Deamido-NAD(+) is bound by residues K156 and D163. ATP is bound by residues K172 and S193. 250 to 251 (HK) lines the deamido-NAD(+) pocket.

The protein belongs to the NAD synthetase family. In terms of assembly, homodimer.

The enzyme catalyses deamido-NAD(+) + NH4(+) + ATP = AMP + diphosphate + NAD(+) + H(+). It participates in cofactor biosynthesis; NAD(+) biosynthesis; NAD(+) from deamido-NAD(+) (ammonia route): step 1/1. Catalyzes the ATP-dependent amidation of deamido-NAD to form NAD. Uses ammonia as a nitrogen source. This chain is NH(3)-dependent NAD(+) synthetase, found in Pyrobaculum aerophilum (strain ATCC 51768 / DSM 7523 / JCM 9630 / CIP 104966 / NBRC 100827 / IM2).